Consider the following 147-residue polypeptide: Ribonuclease H (147 aa).

An RNase H type-1 domain is found at 1 to 142; the sequence is MREVIIYTDG…CDELARAAIA (142 aa). Mg(2+) contacts are provided by Asp9, Glu47, Asp69, and Asp134.

This sequence belongs to the RNase H family. As to quaternary structure, monomer. It depends on Mg(2+) as a cofactor.

The protein resides in the cytoplasm. It carries out the reaction Endonucleolytic cleavage to 5'-phosphomonoester.. Its function is as follows. Endonuclease that specifically degrades the RNA of RNA-DNA hybrids. The protein is Ribonuclease H of Symbiobacterium thermophilum (strain DSM 24528 / JCM 14929 / IAM 14863 / T).